Here is a 783-residue protein sequence, read N- to C-terminus: E3 UFM1-protein ligase 1 homolog (783 aa).

The interval Thr406–Ser476 is disordered. The span at Lys446–Ala457 shows a compositional bias: basic residues.

It belongs to the UFL1 family.

E3 UFM1-protein ligase that mediates ufmylation of target proteins. The polypeptide is E3 UFM1-protein ligase 1 homolog (Drosophila grimshawi (Hawaiian fruit fly)).